A 296-amino-acid polypeptide reads, in one-letter code: CRISPR-associated endonuclease Cas1 2 (296 aa).

Positions 157, 224, and 237 each coordinate Mn(2+).

The protein belongs to the CRISPR-associated endonuclease Cas1 family. As to quaternary structure, homodimer, forms a heterotetramer with a Cas2 homodimer. Mg(2+) serves as cofactor. It depends on Mn(2+) as a cofactor.

Functionally, CRISPR (clustered regularly interspaced short palindromic repeat), is an adaptive immune system that provides protection against mobile genetic elements (viruses, transposable elements and conjugative plasmids). CRISPR clusters contain spacers, sequences complementary to antecedent mobile elements, and target invading nucleic acids. CRISPR clusters are transcribed and processed into CRISPR RNA (crRNA). Acts as a dsDNA endonuclease. Involved in the integration of spacer DNA into the CRISPR cassette. The chain is CRISPR-associated endonuclease Cas1 2 from Chlorobaculum tepidum (strain ATCC 49652 / DSM 12025 / NBRC 103806 / TLS) (Chlorobium tepidum).